A 203-amino-acid chain; its full sequence is MATYAAFKHVELYNVGKAKKRVLRAPGGVSSDIFGSEQPQTPRNVKNLMASNIFSADTDAAQKNNVRQGAHRFYYIGETPRRGQKPVDSYSRLFGEPARPITPSKNHMKSNIPFGQNPNTAPLISKGNYNGKSGSVSSASSSVSSSTENLKINGGVRSEGNPVTGEGYKAGGTDYIQPAHLNGGSQVINKNRVPPGGYSSGLW.

S30 bears the Phosphoserine mark. A phosphothreonine mark is found at T41 and T102. The span at 123-132 (LISKGNYNGK) shows a compositional bias: polar residues. Disordered stretches follow at residues 123–163 (LISK…GNPV) and 182–203 (NGGSQVINKNRVPPGGYSSGLW). Residues 133-146 (SGSVSSASSSVSSS) are compositionally biased toward low complexity. Phosphoserine is present on residues S135 and S146.

The protein belongs to the MAP Jupiter family.

It is found in the nucleus. The protein localises to the cytoplasm. The protein resides in the cytoskeleton. It localises to the spindle. Its function is as follows. Binds to all microtubule populations. In Drosophila mojavensis (Fruit fly), this protein is Microtubule-associated protein Jupiter.